We begin with the raw amino-acid sequence, 434 residues long: Tol-Pal system protein TolB (434 aa).

A signal peptide spans 1-21 (MIVRRALALAALALAASPALA). The interval 411–434 (GDRQTPVTSGKTDLAAPAWGPLAP) is disordered.

This sequence belongs to the TolB family. As to quaternary structure, the Tol-Pal system is composed of five core proteins: the inner membrane proteins TolA, TolQ and TolR, the periplasmic protein TolB and the outer membrane protein Pal. They form a network linking the inner and outer membranes and the peptidoglycan layer.

The protein resides in the periplasm. Part of the Tol-Pal system, which plays a role in outer membrane invagination during cell division and is important for maintaining outer membrane integrity. This chain is Tol-Pal system protein TolB, found in Anaeromyxobacter dehalogenans (strain 2CP-C).